A 342-amino-acid polypeptide reads, in one-letter code: AA9 family lytic polysaccharide monooxygenase H (342 aa).

The signal sequence occupies residues M1–A19. Positions 20 and 106 each coordinate Cu(2+). 2 disulfide bridges follow: C75–C195 and C117–C121. Positions 181 and 190 each coordinate O2. Y192 is a Cu(2+) binding site. The interval A263–Q308 is disordered. Positions N272–G305 are enriched in low complexity. Positions D306–L342 constitute a CBM1 domain.

Belongs to the polysaccharide monooxygenase AA9 family. Cu(2+) serves as cofactor.

It localises to the secreted. It carries out the reaction [(1-&gt;4)-beta-D-glucosyl]n+m + reduced acceptor + O2 = 4-dehydro-beta-D-glucosyl-[(1-&gt;4)-beta-D-glucosyl]n-1 + [(1-&gt;4)-beta-D-glucosyl]m + acceptor + H2O.. The presence of lignin presents a significant source of antioxidants, which probably increase the activity by trapping liberated oxidized fragments. Its function is as follows. Lytic polysaccharide monooxygenase (LPMO) that depolymerizes crystalline and amorphous polysaccharides via the oxidation of scissile alpha- or beta-(1-4)-glycosidic bonds, yielding C1 or C4 oxidation products. Catalysis by LPMOs requires the reduction of the active-site copper from Cu(II) to Cu(I) by a reducing agent and H(2)O(2) or O(2) as a cosubstrate. Hydrolyzes weakly barley beta-glucan, carboxymethyl cellulose, lichenan, wheat arabinoxylan and birchwood xylan. Stimulates the hydrolysis of lignocellulosic substrates (such as hydrothermal pretreated wheat straw or steam-pretreated spruce), when combined with other cellulolytic enzymes. The polypeptide is AA9 family lytic polysaccharide monooxygenase H (Thermothelomyces thermophilus (strain ATCC 42464 / BCRC 31852 / DSM 1799) (Sporotrichum thermophile)).